A 208-amino-acid polypeptide reads, in one-letter code: Uracil phosphoribosyltransferase (208 aa).

5-phospho-alpha-D-ribose 1-diphosphate contacts are provided by residues R78, R103, and D130–S138. Uracil is bound by residues I193 and G198–A200. D199 lines the 5-phospho-alpha-D-ribose 1-diphosphate pocket.

This sequence belongs to the UPRTase family. Mg(2+) is required as a cofactor.

The enzyme catalyses UMP + diphosphate = 5-phospho-alpha-D-ribose 1-diphosphate + uracil. Its pathway is pyrimidine metabolism; UMP biosynthesis via salvage pathway; UMP from uracil: step 1/1. Its activity is regulated as follows. Allosterically activated by GTP. Its function is as follows. Catalyzes the conversion of uracil and 5-phospho-alpha-D-ribose 1-diphosphate (PRPP) to UMP and diphosphate. This Brucella canis (strain ATCC 23365 / NCTC 10854 / RM-666) protein is Uracil phosphoribosyltransferase.